We begin with the raw amino-acid sequence, 606 residues long: MVQEHTESFWGGIIKSMGLVFGDIGTSPIYTLTVIMTLTKPDAEHVLGILSLIVWTLIILVSVEYAWLAMSLGRKGEGGTIVLKEILVRLLKSGRQVAFVGFLAFMGVSLLLGDGIITPAISILSAVEGMRLIPGWENLAQGVLIFIAAVIALILFIFQFKGTDKVAGAFGPIMVIWFGALTLSGIVSIAGTPEVVSAVSPHHAVTFLMHNGLAGFFILSEVILCATGGEALYADMGHLGRKPIIRAWYFVFSALVINYLGQGAFILRNPNETNILFSMVKSQAPILYIPFLCLTIMATIIASQALISGVFSIVYQGITTRILPLMKVDYTSTHLKSQIYIGSVNWSLLVAVIFIMLIFKKSENLAAAYGLAVTGTMFITGIMMTMIFSHTTKKWKVPIALAVTLIDLVYLTANFHKLPHGGYWSLILASIPLAIMIIWTQGQKALYRALRPLDLDTFLLSFGQIYAKGHNIPGTGLFFVRETAVVPPYVIHCIIRSNIIYERNVFVSLNRSDEPFGVKANLTKGIGPGLDSFEILAGYMELVDIERLLKKKGIEEKVIFYGIEDIATNNPFWRVFSTIKRQTANFVQFNKLPVSKLQGVVTRVEM.

Helical transmembrane passes span 18 to 38 (GLVF…IMTL), 46 to 66 (VLGI…VEYA), 97 to 117 (VAFV…DGII), 140 to 160 (AQGV…IFQF), 169 to 189 (AFGP…IVSI), 204 to 224 (AVTF…EVIL), 247 to 267 (AWYF…AFIL), 286 to 306 (ILYI…SQAL), 339 to 359 (IYIG…MLIF), 368 to 388 (AYGL…TMIF), 395 to 415 (WKVP…TANF), and 418 to 438 (LPHG…IMII).

The protein belongs to the HAK/KUP transporter (TC 2.A.72) family.

It localises to the cell inner membrane. It carries out the reaction K(+)(in) + H(+)(in) = K(+)(out) + H(+)(out). In terms of biological role, transport of potassium into the cell. Likely operates as a K(+):H(+) symporter. This chain is Probable potassium transport system protein Kup 2, found in Geobacter metallireducens (strain ATCC 53774 / DSM 7210 / GS-15).